A 435-amino-acid chain; its full sequence is Glutamate-1-semialdehyde 2,1-aminomutase (435 aa).

Position 266 is an N6-(pyridoxal phosphate)lysine (Lys266).

The protein belongs to the class-III pyridoxal-phosphate-dependent aminotransferase family. HemL subfamily. As to quaternary structure, homodimer. Requires pyridoxal 5'-phosphate as cofactor.

The protein resides in the cytoplasm. It carries out the reaction (S)-4-amino-5-oxopentanoate = 5-aminolevulinate. It functions in the pathway porphyrin-containing compound metabolism; protoporphyrin-IX biosynthesis; 5-aminolevulinate from L-glutamyl-tRNA(Glu): step 2/2. This is Glutamate-1-semialdehyde 2,1-aminomutase from Coxiella burnetii (strain CbuG_Q212) (Coxiella burnetii (strain Q212)).